We begin with the raw amino-acid sequence, 489 residues long: 3-octaprenyl-4-hydroxybenzoate carboxy-lyase (489 aa).

Mn(2+) is bound at residue asparagine 172. Prenylated FMN contacts are provided by residues 175 to 177, 189 to 191, and 194 to 195; these read IYR, RWL, and RG. Glutamate 238 serves as a coordination point for Mn(2+). The Proton donor role is filled by aspartate 287.

Belongs to the UbiD family. In terms of assembly, homohexamer. Prenylated FMN is required as a cofactor. Mn(2+) serves as cofactor.

It localises to the cell membrane. It catalyses the reaction a 4-hydroxy-3-(all-trans-polyprenyl)benzoate + H(+) = a 2-(all-trans-polyprenyl)phenol + CO2. Its pathway is cofactor biosynthesis; ubiquinone biosynthesis. Catalyzes the decarboxylation of 3-octaprenyl-4-hydroxy benzoate to 2-octaprenylphenol, an intermediate step in ubiquinone biosynthesis. In Psychromonas ingrahamii (strain DSM 17664 / CCUG 51855 / 37), this protein is 3-octaprenyl-4-hydroxybenzoate carboxy-lyase.